The primary structure comprises 85 residues: Large ribosomal subunit protein bL27 (85 aa).

Residues 1 to 20 (MATKKAGGSTRNGRDSEAKR) form a disordered region.

It belongs to the bacterial ribosomal protein bL27 family.

The polypeptide is Large ribosomal subunit protein bL27 (Glaesserella parasuis serovar 5 (strain SH0165) (Haemophilus parasuis)).